The chain runs to 660 residues: Bifunctional polymyxin resistance protein ArnA (660 aa).

The segment at 1-304 (MKAVIFAYHD…TLGLVAGARL (304 aa)) is formyltransferase ArnAFT. Histidine 104 (proton donor; for formyltransferase activity) is an active-site residue. Residues arginine 114 and 136-140 (VKRAD) contribute to the (6R)-10-formyltetrahydrofolate site. The interval 314 to 660 (RRIRVLILGV…RSVDVAERAS (347 aa)) is dehydrogenase ArnADH. Residues aspartate 347 and 368–369 (DI) each bind NAD(+). UDP-alpha-D-glucuronate is bound by residues alanine 393, tyrosine 398, and 432 to 433 (TS). The Proton acceptor; for decarboxylase activity role is filled by glutamate 434. UDP-alpha-D-glucuronate contacts are provided by residues arginine 460, asparagine 492, 526–535 (KLIDGGQQKR), and tyrosine 613. Arginine 619 (proton donor; for decarboxylase activity) is an active-site residue.

In the N-terminal section; belongs to the Fmt family. UDP-L-Ara4N formyltransferase subfamily. The protein in the C-terminal section; belongs to the NAD(P)-dependent epimerase/dehydratase family. UDP-glucuronic acid decarboxylase subfamily. As to quaternary structure, homohexamer, formed by a dimer of trimers.

It catalyses the reaction UDP-alpha-D-glucuronate + NAD(+) = UDP-beta-L-threo-pentopyranos-4-ulose + CO2 + NADH. The catalysed reaction is UDP-4-amino-4-deoxy-beta-L-arabinose + (6R)-10-formyltetrahydrofolate = UDP-4-deoxy-4-formamido-beta-L-arabinose + (6S)-5,6,7,8-tetrahydrofolate + H(+). It participates in nucleotide-sugar biosynthesis; UDP-4-deoxy-4-formamido-beta-L-arabinose biosynthesis; UDP-4-deoxy-4-formamido-beta-L-arabinose from UDP-alpha-D-glucuronate: step 1/3. It functions in the pathway nucleotide-sugar biosynthesis; UDP-4-deoxy-4-formamido-beta-L-arabinose biosynthesis; UDP-4-deoxy-4-formamido-beta-L-arabinose from UDP-alpha-D-glucuronate: step 3/3. The protein operates within bacterial outer membrane biogenesis; lipopolysaccharide biosynthesis. Its function is as follows. Bifunctional enzyme that catalyzes the oxidative decarboxylation of UDP-glucuronic acid (UDP-GlcUA) to UDP-4-keto-arabinose (UDP-Ara4O) and the addition of a formyl group to UDP-4-amino-4-deoxy-L-arabinose (UDP-L-Ara4N) to form UDP-L-4-formamido-arabinose (UDP-L-Ara4FN). The modified arabinose is attached to lipid A and is required for resistance to polymyxin and cationic antimicrobial peptides. The protein is Bifunctional polymyxin resistance protein ArnA of Salmonella paratyphi C (strain RKS4594).